The chain runs to 369 residues: Homoserine O-succinyltransferase (369 aa).

Residues 90–93 (GISA) form an important for substrate specificity region. In terms of domain architecture, AB hydrolase-1 spans 107–353 (WWSGAVGVRA…YGHDAFLKED (247 aa)). The active-site Nucleophile is the serine 175. Arginine 236 is a substrate binding site. Residues aspartate 316 and histidine 346 contribute to the active site. Position 347 (aspartate 347) interacts with substrate.

Belongs to the AB hydrolase superfamily. MetX family. In terms of assembly, homodimer.

The protein localises to the cytoplasm. The enzyme catalyses L-homoserine + succinyl-CoA = O-succinyl-L-homoserine + CoA. It functions in the pathway amino-acid biosynthesis; L-methionine biosynthesis via de novo pathway; O-succinyl-L-homoserine from L-homoserine: step 1/1. Functionally, transfers a succinyl group from succinyl-CoA to L-homoserine, forming succinyl-L-homoserine. This is Homoserine O-succinyltransferase from Brevundimonas diminuta (strain ATCC 11568 / DSM 7234 / NBRC 12697 / NCIMB 9393 / NCTC 8545).